The sequence spans 201 residues: TATA-box-binding protein 2 (201 aa).

A run of 2 repeats spans residues Leu26–Ile102 and Ile116–Leu193.

This sequence belongs to the TBP family. Belongs to the TFIID complex together with the TBP-associated factors (TAFs). Binds DNA as monomer.

The protein localises to the nucleus. Its function is as follows. General transcription factor that functions at the core of the DNA-binding multiprotein factor TFIID. Binding of TFIID to the TATA box is the initial transcriptional step of the pre-initiation complex (PIC), playing a role in the activation of eukaryotic genes transcribed by RNA polymerase II. The sequence is that of TATA-box-binding protein 2 (TBP2) from Triticum aestivum (Wheat).